Consider the following 317-residue polypeptide: Transaldolase (317 aa).

The active-site Schiff-base intermediate with substrate is Lys-132.

The protein belongs to the transaldolase family. Type 1 subfamily. As to quaternary structure, homodimer.

It localises to the cytoplasm. It carries out the reaction D-sedoheptulose 7-phosphate + D-glyceraldehyde 3-phosphate = D-erythrose 4-phosphate + beta-D-fructose 6-phosphate. It participates in carbohydrate degradation; pentose phosphate pathway; D-glyceraldehyde 3-phosphate and beta-D-fructose 6-phosphate from D-ribose 5-phosphate and D-xylulose 5-phosphate (non-oxidative stage): step 2/3. Functionally, transaldolase is important for the balance of metabolites in the pentose-phosphate pathway. The polypeptide is Transaldolase (Haemophilus influenzae (strain PittEE)).